The chain runs to 137 residues: Envelope glycoprotein L (137 aa).

Positions 1–25 are cleaved as a signal peptide; the sequence is MRAVGVFLATCLVTIFVLPTWGNWA. An interaction with gH region spans residues 23 to 128; sequence NWAYPCCHVT…SVEDLFGANL (106 aa). 2 disulfides stabilise this stretch: cysteine 28–cysteine 56 and cysteine 29–cysteine 79.

The protein belongs to the herpesviridae glycoprotein L family. In terms of assembly, interacts with glycoprotein H (gH); this interaction is necessary for the correct processing and cell surface expression of gH. The heterodimer gH/gL seems to interact with gB trimers during fusion. The heterodimer gH/gL interacts with host EPHA2 to facilitate virus internalization and fusion.

It is found in the virion membrane. The protein resides in the host cell membrane. The protein localises to the host Golgi apparatus. Its subcellular location is the host trans-Golgi network. Its function is as follows. The heterodimer glycoprotein H-glycoprotein L is required for the fusion of viral and plasma membranes leading to virus entry into the host cell. Acts as a functional inhibitor of gH and maintains gH in an inhibited form. Upon binding to host integrins, gL dissociates from gH leading to activation of the viral fusion glycoproteins gB and gH. The heterodimer gH/gL targets also host EPHA2 to promote viral entry. The polypeptide is Envelope glycoprotein L (Homo sapiens (Human)).